The chain runs to 211 residues: Large ribosomal subunit protein uL4 (211 aa).

A disordered region spans residues 44 to 90; it reads ERQGTHSTLTKGEVRGGGKKPWRQKHTGKARTGSTRNPHWTGGGVVF. Residues 60–72 are compositionally biased toward basic residues; it reads GGKKPWRQKHTGK.

Belongs to the universal ribosomal protein uL4 family. Part of the 50S ribosomal subunit.

In terms of biological role, one of the primary rRNA binding proteins, this protein initially binds near the 5'-end of the 23S rRNA. It is important during the early stages of 50S assembly. It makes multiple contacts with different domains of the 23S rRNA in the assembled 50S subunit and ribosome. Forms part of the polypeptide exit tunnel. The protein is Large ribosomal subunit protein uL4 of Ureaplasma urealyticum serovar 10 (strain ATCC 33699 / Western).